A 418-amino-acid chain; its full sequence is Serine hydroxymethyltransferase (418 aa).

Residues Leu121 and 125–127 (GHL) each bind (6S)-5,6,7,8-tetrahydrofolate. At Lys230 the chain carries N6-(pyridoxal phosphate)lysine. Residues Glu246 and 355 to 357 (SPF) contribute to the (6S)-5,6,7,8-tetrahydrofolate site.

This sequence belongs to the SHMT family. In terms of assembly, homodimer. Pyridoxal 5'-phosphate serves as cofactor.

Its subcellular location is the cytoplasm. The catalysed reaction is (6R)-5,10-methylene-5,6,7,8-tetrahydrofolate + glycine + H2O = (6S)-5,6,7,8-tetrahydrofolate + L-serine. It functions in the pathway one-carbon metabolism; tetrahydrofolate interconversion. The protein operates within amino-acid biosynthesis; glycine biosynthesis; glycine from L-serine: step 1/1. Catalyzes the reversible interconversion of serine and glycine with tetrahydrofolate (THF) serving as the one-carbon carrier. This reaction serves as the major source of one-carbon groups required for the biosynthesis of purines, thymidylate, methionine, and other important biomolecules. Also exhibits THF-independent aldolase activity toward beta-hydroxyamino acids, producing glycine and aldehydes, via a retro-aldol mechanism. The protein is Serine hydroxymethyltransferase of Streptococcus pneumoniae serotype 2 (strain D39 / NCTC 7466).